Reading from the N-terminus, the 535-residue chain is Berberine bridge enzyme-like 3 (535 aa).

The N-terminal stretch at 1–19 (MKEALFGLYLVLLVSGLEA) is a signal peptide. Cys-32 and Cys-95 form a disulfide bridge. Asn-52 carries N-linked (GlcNAc...) asparagine glycosylation. One can recognise an FAD-binding PCMH-type domain in the interval 73–247 (NNKNLLAIVV…LSWKINLVEV (175 aa)). A cross-link (6-(S-cysteinyl)-8alpha-(pros-histidyl)-FAD (His-Cys)) is located at residues 110–172 (HDNEGLSYVS…QTLAFPAGIC (63 aa)). Asn-214, Asn-257, Asn-292, Asn-321, Asn-341, Asn-415, Asn-439, and Asn-444 each carry an N-linked (GlcNAc...) asparagine glycan.

It belongs to the oxygen-dependent FAD-linked oxidoreductase family. FAD is required as a cofactor. The FAD cofactor is bound via a bicovalent 6-S-cysteinyl, 8alpha-N1-histidyl FAD linkage.

It localises to the endoplasmic reticulum. It is found in the cell membrane. The protein resides in the secreted. The protein localises to the cell wall. In terms of biological role, flavin-dependent oxidoreductase involved in the biosynthetic pathway to 4-hydroxyindole-3-carbonyl nitrile (4-OH-ICN), a cyanogenic metabolite required for inducible pathogen defense. Converts indole cyanohydrin into indole-3-carbonyl nitrile (ICN). This chain is Berberine bridge enzyme-like 3, found in Arabidopsis thaliana (Mouse-ear cress).